The chain runs to 805 residues: MNFAEVIVDVSTKNIDRPFDYKIPDHLKGMIKTGMRVIVPFGPRKIQGFVTAVKEASDLSGKSVKEVEDLLDLTPVLTEELMILSSWLSDKTLSFKITALQAMLPAALKAKYEKELKIAHGADLPPQVERLFSETKTLLYSDIPDHETLKLIQRHVQKGDIDVTYKVAQKTNKKMVRHIQANASKEELAKQAEGLSRQAAKQQAILHFLISEPEGVKIPAAELCKKTDTSSATIKTLIQKGLLKESYEEVYRDPYQDKMFKKTEPLPLTDEQRAAFEPIRETLDSDEHKVFLLHGVTGSGKTEIYLQSIEKVLAKGKEAIVLVPEISLTPQMVNRFKGRFGSQVAVMHSGLSTGEKYDEWRKIHRKEVRLVVGARSAIFAPFENLGMIIIDEEHESSYKQEEMPRYHAKEVAIKRAEHHSCPVVLGSATPTLESYARAQKGVYELLSLKHRVNHRVMPEVSLVDMREELRNGNRSMFSVELMEKLEETIAKGEQAVLFLNKRGYSSFVMCRDCGYVPQCPHCDISMTYHRYGQRLKCHYCGHEEPVPHTCPECASEHIRFFGTGTQRVEEELTKVLPSARVIRMDVDTTSRKGAHEKLLSAFGEGKADILLGTQMIAKGLDFPNVTLVGVLSADTTLHIPDFRSAEKTFQLLTQVSGRAGRHEKPGHVIIQTYTPSHYSIQLTKTHDYETFYQHEMAHRREQSYPPYYYLALVTVSHEEVAKAAVTAEKIAHFLKANCGADTKILGPSASPIARIKDRYRYQCVIKYKQETQLSALLKKILEHYKREIEQKHVMISIDMNPYMMM.

The 3'BD stretch occupies residues 1 to 110 (MNFAEVIVDV…QAMLPAALKA (110 aa)). A linker region spans residues 111 to 166 (KYEKELKIAHGADLPPQVERLFSETKTLLYSDIPDHETLKLIQRHVQKGDIDVTYK). The segment at 167 to 253 (VAQKTNKKMV…KESYEEVYRD (87 aa)) is WH. The Helicase ATP-binding domain maps to 282–448 (TLDSDEHKVF…QKGVYELLSL (167 aa)). An ATP-binding site is contributed by 295–302 (GVTGSGKT). Positions 391–394 (DEEH) match the DEAH box motif. Zn(2+) contacts are provided by cysteine 510, cysteine 513, cysteine 519, cysteine 522, cysteine 537, cysteine 540, cysteine 550, and cysteine 553. One can recognise a Helicase C-terminal domain in the interval 545–699 (PVPHTCPECA…TFYQHEMAHR (155 aa)).

It belongs to the helicase family. PriA subfamily. Monomer. Component of the replication restart primosome which assembles in this order; PriA, DnaD then DnaB. The preferred DNA substrate mimics an arrested DNA replication fork with unreplicated lagging strand. Interacts with DnaD but not DnaB. Interacts with SSB (sbbA) via the latter's 35 residue C-terminal tail which tethers PriA to ssDNA. Colocalizes with DNA pol III subunit gamma/tau (dnaX). May interact with RarA. Requires Zn(2+) as cofactor.

The protein resides in the cytoplasm. The protein localises to the nucleoid. It carries out the reaction Couples ATP hydrolysis with the unwinding of duplex DNA by translocating in the 3'-5' direction.. The enzyme catalyses ATP + H2O = ADP + phosphate + H(+). Initiates the restart of stalled replication forks, which reloads the replicative helicase on sites other than the origin of replication. Recognizes and binds to abandoned replication forks and remodels them to uncover a helicase loading site. Promotes assembly of the primosome at these replication forks. Serves as the initiating protein for assembly of the replication restart primosome; binding of PriA to an arrested DNA replication fork with unreplicated lagging strand triggers assembly. Sequentially DnaD (possibly as a dimer) and DnaB homotetramers bind. Assembly probably continues by loading of the DnaC replicative helicase aided by helicase loader DnaI. A single-strand (ss)DNA-dependent ATPase with helicase activity. Recognizes and binds the arrested nascent DNA chain at stalled replication forks. Binds forked DNA substrates and makes a larger complex with RarA; RarA has no effect on the helicase function. Binds ssDNA, D-loops and replication fork-like substrates but not double-stranded (ds)DNA; the preferred DNA substrate mimics an arrested DNA replication fork with an unreplicated lagging strand. Recognizes nicked dsDNA. A supershift on ssDNA occurs in the presence of single-stranded binding protein (SSB). Cannot substitute for E.coli PriA. Functionally, required for replication of plasmids that have a rolling circle mechanism, which produces circular single-stranded (ss)DNA intermediates corresponding to the lagging strand template, which are then converted into double-stranded (ds)DNA; priA is required to activate the conversion of ssDNA into dsDNA. This Bacillus subtilis (strain 168) protein is Replication restart protein PriA.